Here is a 173-residue protein sequence, read N- to C-terminus: Alpha-crystallin B chain (173 aa).

M1 bears the N-acetylmethionine mark. The sHSP domain occupies 54 to 162 (RLPSWIESGL…PERSIPITRE (109 aa)). Positions 81, 102, 104, and 109 each coordinate Zn(2+).

The protein belongs to the small heat shock protein (HSP20) family. In terms of assembly, heteromer composed of three CRYAA and one CRYAB subunits. Aggregates with homologous proteins, including the small heat shock protein HSPB1, to form large heteromeric complexes. Inter-subunit bridging via zinc ions enhances stability, which is crucial as there is no protein turn over in the lens.

In terms of biological role, may contribute to the transparency and refractive index of the lens. The sequence is that of Alpha-crystallin B chain (CRYAB) from Aquarana catesbeiana (American bullfrog).